The chain runs to 408 residues: Aminoacylase-1A (408 aa).

His80 serves as a coordination point for Zn(2+). Residue Asp82 is part of the active site. Position 113 (Asp113) interacts with Zn(2+). The Proton acceptor role is filled by Glu147. Zn(2+) is bound by residues Glu148, Glu175, and His373. Ser408 is subject to Phosphoserine.

The protein belongs to the peptidase M20A family. As to quaternary structure, homodimer. Zn(2+) is required as a cofactor. Post-translationally, the N-terminus is blocked.

The protein localises to the cytoplasm. It catalyses the reaction an N-acyl-L-amino acid + H2O = an L-alpha-amino acid + a carboxylate. The enzyme catalyses an N-acetyl-L-cysteine-S-conjugate + H2O = an S-substituted L-cysteine + acetate. Functionally, involved in the hydrolysis of N-acylated or N-acetylated amino acids (except L-aspartate). In Rattus norvegicus (Rat), this protein is Aminoacylase-1A (Acy1a).